Reading from the N-terminus, the 340-residue chain is Dihydroorotate dehydrogenase (quinone) (340 aa).

FMN-binding positions include 67-71 (AGFDK) and Thr91. Lys71 contacts substrate. 116 to 120 (NRMGF) provides a ligand contact to substrate. Positions 143 and 176 each coordinate FMN. Asn176 is a substrate binding site. Ser179 functions as the Nucleophile in the catalytic mechanism. Position 181 (Asn181) interacts with substrate. FMN is bound by residues Lys217 and Thr245. 246 to 247 (NT) serves as a coordination point for substrate. Residues Gly267, Gly296, and 317 to 318 (YT) contribute to the FMN site.

This sequence belongs to the dihydroorotate dehydrogenase family. Type 2 subfamily. Monomer. It depends on FMN as a cofactor.

Its subcellular location is the cell membrane. The catalysed reaction is (S)-dihydroorotate + a quinone = orotate + a quinol. It participates in pyrimidine metabolism; UMP biosynthesis via de novo pathway; orotate from (S)-dihydroorotate (quinone route): step 1/1. Catalyzes the conversion of dihydroorotate to orotate with quinone as electron acceptor. The polypeptide is Dihydroorotate dehydrogenase (quinone) (Christiangramia forsetii (strain DSM 17595 / CGMCC 1.15422 / KT0803) (Gramella forsetii)).